Here is an 826-residue protein sequence, read N- to C-terminus: (2S)-3-sulfopropanediol dehydratase (826 aa).

In terms of domain architecture, PFL spans 33–695 (PRVNRLRQAF…NTNASIDGRK (663 aa)). Cys464 (cysteine radical intermediate) is an active-site residue. Residue Glu466 is the Proton acceptor of the active site. In terms of domain architecture, Glycine radical spans 706-826 (PVHTDGGSHD…DLIQRTELHF (121 aa)). A Glycine radical modification is found at Gly802.

This sequence belongs to the glycyl radical enzyme (GRE) family. Post-translationally, requires the activating protein HpfH to generate the key active site glycyl radical on Gly-802 that is involved in catalysis.

The enzyme catalyses (2S)-3-sulfopropanediol = 3-oxopropane-1-sulfonate + H2O. The protein operates within organosulfur degradation; alkanesulfonate degradation. Functionally, involved in the degradation of the organosulfur compound 2(S)-dihydroxypropanesulfonate (DHPS). Catalyzes the radical-mediated dehydration of DHPS to produce 3-sulfopropionaldehyde (3-oxopropane-1-sulfonate). The sequence is that of (2S)-3-sulfopropanediol dehydratase from Klebsiella oxytoca.